Reading from the N-terminus, the 369-residue chain is Succinyl-diaminopimelate desuccinylase (369 aa).

His77 is a Zn(2+) binding site. Asp79 is a catalytic residue. Zn(2+) is bound at residue Asp103. Glu136 functions as the Proton acceptor in the catalytic mechanism. Residues Glu137, Glu165, and His345 each coordinate Zn(2+).

The protein belongs to the peptidase M20A family. The cofactor is Zn(2+). Requires Co(2+) as cofactor.

The enzyme catalyses N-succinyl-(2S,6S)-2,6-diaminopimelate + H2O = (2S,6S)-2,6-diaminopimelate + succinate. It participates in amino-acid biosynthesis; L-lysine biosynthesis via DAP pathway; LL-2,6-diaminopimelate from (S)-tetrahydrodipicolinate (succinylase route): step 3/3. The protein is Succinyl-diaminopimelate desuccinylase (dapE) of Corynebacterium glutamicum (strain ATCC 13032 / DSM 20300 / JCM 1318 / BCRC 11384 / CCUG 27702 / LMG 3730 / NBRC 12168 / NCIMB 10025 / NRRL B-2784 / 534).